Consider the following 879-residue polypeptide: Protein translocase subunit SecA (879 aa).

ATP-binding positions include Gln87, 105 to 109 (GEGKT), and Asp509. A disordered region spans residues 834–879 (IAEDSEKLKPITGTKKPKRNDPCPCGSGKKYKNCCGQSGPKKGLLA). 4 residues coordinate Zn(2+): Cys856, Cys858, Cys867, and Cys868.

It belongs to the SecA family. In terms of assembly, monomer and homodimer. Part of the essential Sec protein translocation apparatus which comprises SecA, SecYEG and auxiliary proteins SecDF-YajC and YidC. The cofactor is Zn(2+).

The protein resides in the cell inner membrane. Its subcellular location is the cytoplasm. The catalysed reaction is ATP + H2O + cellular proteinSide 1 = ADP + phosphate + cellular proteinSide 2.. Functionally, part of the Sec protein translocase complex. Interacts with the SecYEG preprotein conducting channel. Has a central role in coupling the hydrolysis of ATP to the transfer of proteins into and across the cell membrane, serving as an ATP-driven molecular motor driving the stepwise translocation of polypeptide chains across the membrane. The chain is Protein translocase subunit SecA from Sulfurovum sp. (strain NBC37-1).